The primary structure comprises 188 residues: dCTP deaminase (188 aa).

Residues 111 to 116 (KSTYAR), 135 to 137 (TLE), Gln156, Tyr170, and Gln180 each bind dCTP. The active-site Proton donor/acceptor is the Glu137.

This sequence belongs to the dCTP deaminase family. As to quaternary structure, homotrimer.

The enzyme catalyses dCTP + H2O + H(+) = dUTP + NH4(+). Its pathway is pyrimidine metabolism; dUMP biosynthesis; dUMP from dCTP (dUTP route): step 1/2. Its function is as follows. Catalyzes the deamination of dCTP to dUTP. This chain is dCTP deaminase, found in Pseudomonas aeruginosa (strain UCBPP-PA14).